The chain runs to 48 residues: Delta-actitoxin-Bgr2b (48 aa).

Disulfide bonds link cysteine 4/cysteine 45, cysteine 6/cysteine 35, and cysteine 28/cysteine 46.

This sequence belongs to the sea anemone sodium channel inhibitory toxin family. Type I subfamily.

It localises to the secreted. The protein resides in the nematocyst. Its function is as follows. Binds voltage-dependently at site 3 of sodium channels (Nav) and inhibits the inactivation of the activated channels, thereby blocking neuronal transmission. Has effect on SCN4A/SCN1B, and SCN5A/SCN1B, has no effect on SCN2A/SCN1B, and SCN10A/SCN1B. Possesses the highest efficacy for the insect sodium channel para/tipE. Also interacts with sodium channels in cardiac cells. Shows lethality to crabs. The protein is Delta-actitoxin-Bgr2b of Bunodosoma granuliferum (Red warty sea anemone).